The sequence spans 317 residues: Protease 7 (317 aa).

A signal peptide spans 1 to 20; it reads MRAKLLGIVLTTPIAISSFA. At 21–31 the chain is on the periplasmic side; it reads STETLSFTPDN. A beta stranded transmembrane segment spans residues 32–41; it reads INADISLGTL. The Extracellular segment spans residues 42-69; that stretch reads SGKTKERVYLAEEGGRKVSQLDWKFNNA. The chain crosses the membrane as a beta stranded span at residues 70–78; the sequence is AIIKGAINW. The Periplasmic portion of the chain corresponds to 79–83; the sequence is DLMPQ. The chain crosses the membrane as a beta stranded span at residues 84 to 92; that stretch reads ISIGAAGWT. The Extracellular segment spans residues 93–130; that stretch reads TLGSRGGNMVDQDWMDSSNPGTWTDESRHPDTQLNYAN. Catalysis depends on residues Asp103 and Asp105. A beta stranded transmembrane segment spans residues 131-140; that stretch reads EFDLNIKGWL. The Periplasmic segment spans residues 141-145; sequence LNEPN. A beta stranded membrane pass occupies residues 146–156; the sequence is YRLGLMAGYQE. Residues 157–197 lie on the Extracellular side of the membrane; the sequence is SRYSFTARGGSYIYSSEEGFRDDIGSFPNGERAIGYKQRFK. Residues 198–209 traverse the membrane as a beta stranded segment; sequence MPYIGLTGSYRY. Residues 210–211 lie on the Periplasmic side of the membrane; it reads ED. A beta stranded transmembrane segment spans residues 212–221; the sequence is FELGGTFKYS. Residues 222-250 lie on the Extracellular side of the membrane; it reads GWVESSDNDEHYDPGKRITYRSKVKDQNY. Active-site residues include Asp230 and His232. The beta stranded transmembrane segment at 251–261 threads the bilayer; sequence YSVAVNAGYYV. The Periplasmic portion of the chain corresponds to 262–264; sequence TPN. Residues 265–274 form a beta stranded membrane-spanning segment; sequence AKVYVEGAWN. The Extracellular segment spans residues 275–306; sequence RVTNKKGNTSLYDHNNNTSDYSKNGAGIENYN. The beta stranded transmembrane segment at 307–316 threads the bilayer; that stretch reads FITTAGLKYT. A topological domain (periplasmic) is located at residue Phe317.

The protein belongs to the peptidase A26 family. As to quaternary structure, homopentamer.

Its subcellular location is the cell outer membrane. It catalyses the reaction Has a virtual requirement for Arg in the P1 position and a slightly less stringent preference for this residue in the P1' position, which can also contain Lys, Gly or Val.. With respect to regulation, inhibited by zinc. Its function is as follows. Protease that can cleave T7 RNA polymerase, ferric enterobactin receptor protein (FEP), antimicrobial peptide protamine and other proteins. This protease has a specificity for paired basic residues. The protein is Protease 7 (ompT) of Escherichia coli (strain K12).